The sequence spans 107 residues: Integration host factor subunit beta (107 aa).

The segment at 54-107 is disordered; that stretch reads NRRPARVGRNPKSGEKVQVPEKHVPHFKPGKELRERVDGRAGEPLKNDEPEDGQ. Residues 65 to 101 are compositionally biased toward basic and acidic residues; that stretch reads KSGEKVQVPEKHVPHFKPGKELRERVDGRAGEPLKND.

The protein belongs to the bacterial histone-like protein family. Heterodimer of an alpha and a beta chain.

Functionally, this protein is one of the two subunits of integration host factor, a specific DNA-binding protein that functions in genetic recombination as well as in transcriptional and translational control. This Burkholderia thailandensis (strain ATCC 700388 / DSM 13276 / CCUG 48851 / CIP 106301 / E264) protein is Integration host factor subunit beta.